The chain runs to 359 residues: Centromere-binding protein 1 (359 aa).

The tract at residues 1 to 262 is disordered; that stretch reads MSGKRSYQDD…SHKEVERRRR (262 aa). Residues 55-78 are compositionally biased toward basic and acidic residues; that stretch reads KENKENRDGDKVGDDEHDVVKGES. A compositionally biased stretch (acidic residues) spans 120-161; it reads GDEDEDEDEEEEEDEDDHVDIDDVDKDPDAVIDEDDDEEDED. Over residues 249-259 the composition is skewed to basic and acidic residues; the sequence is QRKESHKEVER. In terms of domain architecture, bHLH spans 249-297; the sequence is QRKESHKEVERRRRQNINTAIEKLSDLLPVKETSKAAILSRAAEYIQKM.

As to quaternary structure, binds DNA as a dimer.

It localises to the nucleus. It is found in the chromosome. The protein resides in the centromere. Required for chromosome stability and methionine prototrophy. It is involved in chromosomal segregation. Binds to a highly conserved DNA sequence (5'-RTCACRTG-3'), called CDEI, found in centromeres and in several promoters. The sequence is that of Centromere-binding protein 1 (CBF1) from Kluyveromyces lactis (strain ATCC 8585 / CBS 2359 / DSM 70799 / NBRC 1267 / NRRL Y-1140 / WM37) (Yeast).